The chain runs to 404 residues: L-cysteine:1D-myo-inositol 2-amino-2-deoxy-alpha-D-glucopyranoside ligase (404 aa).

Cys-32 contacts Zn(2+). L-cysteinyl-5'-AMP contacts are provided by residues 32–35 (CGIT), Thr-47, and 70–72 (NIT). The 'HIGH' region signature appears at 34-44 (ITPYDSTHLGH). The 'ERGGDP' region signature appears at 176 to 181 (ERGGDP). Trp-216 contributes to the L-cysteinyl-5'-AMP binding site. Cys-220 lines the Zn(2+) pocket. 238–240 (GSD) lines the L-cysteinyl-5'-AMP pocket. Residue His-245 participates in Zn(2+) binding. L-cysteinyl-5'-AMP is bound at residue Ile-272. The 'KMSKS' region motif lies at 278-282 (KMSKS).

The protein belongs to the class-I aminoacyl-tRNA synthetase family. MshC subfamily. As to quaternary structure, monomer. Requires Zn(2+) as cofactor.

It carries out the reaction 1D-myo-inositol 2-amino-2-deoxy-alpha-D-glucopyranoside + L-cysteine + ATP = 1D-myo-inositol 2-(L-cysteinylamino)-2-deoxy-alpha-D-glucopyranoside + AMP + diphosphate + H(+). Catalyzes the ATP-dependent condensation of GlcN-Ins and L-cysteine to form L-Cys-GlcN-Ins. The chain is L-cysteine:1D-myo-inositol 2-amino-2-deoxy-alpha-D-glucopyranoside ligase (mshC) from Corynebacterium glutamicum (strain ATCC 13032 / DSM 20300 / JCM 1318 / BCRC 11384 / CCUG 27702 / LMG 3730 / NBRC 12168 / NCIMB 10025 / NRRL B-2784 / 534).